A 518-amino-acid chain; its full sequence is Arp2/3 complex-activating protein rickA (518 aa).

Residues 310-518 (SAAQLQSAET…ERNAKQSQQR (209 aa)) form a disordered region. 2 stretches are compositionally biased toward pro residues: residues 344–354 (TPPPAPPPPMP) and 382–401 (VPPP…PPPV). A compositionally biased stretch (polar residues) spans 418 to 430 (QPRPAVDTTNLMK). A WH2 domain is found at 424–441 (DTTNLMKQIQGGFNLKKI). The span at 439-461 (KKIEYGEDGKPIPKNKEDTKETS) shows a compositional bias: basic and acidic residues. The segment covering 488–498 (GTDSGWASDVS) has biased composition (polar residues).

Homodimer.

The protein resides in the cell surface. In terms of biological role, recruits and activates the Arp2/3 complex, which in turn leads to actin polymerization, promoting Rickettsia motility during infection. The chain is Arp2/3 complex-activating protein rickA (rickA) from Rickettsia bellii (strain RML369-C).